The chain runs to 140 residues: Calcitonin (140 aa).

The signal sequence occupies residues 1-25 (MGFWKFSPFLPLSILVLYQVGIIQA). The propeptide occupies 26–81 (APFRSALESLPDPAVLPEEESRLLLAALVKDYVQMKVRALEQEQETGGASLDSPRA). C84 and C90 are oxidised to a cystine. A Proline amide modification is found at P115. The propeptide occupies 120 to 140 (VMARGLERDHGPHIGTSQDAY).

Belongs to the calcitonin family.

The protein resides in the secreted. Functionally, calcitonin is a peptide hormone that causes a rapid but short-lived drop in the level of calcium and phosphate in blood by promoting the incorporation of those ions in the bones. Calcitonin function is mediated by the calcitonin receptor/CALCR and the CALCR-RAMP2 (AMYR2) receptor complex. The sequence is that of Calcitonin (CALCA) from Equus caballus (Horse).